We begin with the raw amino-acid sequence, 371 residues long: Anhydro-N-acetylmuramic acid kinase (371 aa).

12 to 19 (GTSADGID) lines the ATP pocket.

This sequence belongs to the anhydro-N-acetylmuramic acid kinase family.

The enzyme catalyses 1,6-anhydro-N-acetyl-beta-muramate + ATP + H2O = N-acetyl-D-muramate 6-phosphate + ADP + H(+). It participates in amino-sugar metabolism; 1,6-anhydro-N-acetylmuramate degradation. Its pathway is cell wall biogenesis; peptidoglycan recycling. Its function is as follows. Catalyzes the specific phosphorylation of 1,6-anhydro-N-acetylmuramic acid (anhMurNAc) with the simultaneous cleavage of the 1,6-anhydro ring, generating MurNAc-6-P. Is required for the utilization of anhMurNAc either imported from the medium or derived from its own cell wall murein, and thus plays a role in cell wall recycling. The sequence is that of Anhydro-N-acetylmuramic acid kinase from Saccharophagus degradans (strain 2-40 / ATCC 43961 / DSM 17024).